The chain runs to 141 residues: Cystatin-SA (141 aa).

Residues 1 to 20 (MAWPLCTLLLLLATQAVALA) form the signal peptide. The short motif at 76-80 (QIVGG) is the Secondary area of contact element. 2 disulfide bridges follow: Cys94/Cys104 and Cys118/Cys138.

Expressed in submandibular and sublingual saliva but not in parotid saliva (at protein level). Expressed in submandibular gland and parotid gland.

The protein localises to the secreted. In terms of biological role, thiol protease inhibitor. This is Cystatin-SA (CST2) from Homo sapiens (Human).